The chain runs to 169 residues: 4-hydroxylaminobenzoate lyase (169 aa).

The protein belongs to the PnbB family.

It carries out the reaction 4-hydroxylaminobenzoate + H2O + H(+) = 3,4-dihydroxybenzoate + NH4(+). Its function is as follows. Lyase involved in the degradation of nitroaromatic compounds. Catalyzes the conversion of 4-hydroxylaminobenzoate to 3,4-dihydroxybenzoate (protocatechuate). The sequence is that of 4-hydroxylaminobenzoate lyase from Nocardioides sp. (strain LMS-CY).